The sequence spans 123 residues: Large ribosomal subunit protein bL17 (123 aa).

Belongs to the bacterial ribosomal protein bL17 family. Part of the 50S ribosomal subunit. Contacts protein L32.

The chain is Large ribosomal subunit protein bL17 from Borreliella afzelii (strain PKo) (Borrelia afzelii).